The primary structure comprises 38 residues: Defensin D7 (38 aa).

It belongs to the DEFL family. Group IV subfamily. Distributed in the epidermal cell layer of leaves and in the subepidermal layer region of stems. Not in roots.

It is found in the secreted. It localises to the cell wall. Its function is as follows. Antimicrobial peptide. Active against Fusarium spp., Gram-positive and Gram-negative bacterial pathogens. The sequence is that of Defensin D7 from Spinacia oleracea (Spinach).